Reading from the N-terminus, the 421-residue chain is Periplasmic [Fe] hydrogenase large subunit (421 aa).

4Fe-4S ferredoxin-type domains follow at residues 26 to 57 (HFVQIDEAKCIGCDTCSQYCPTAAIFGEMGEP) and 59 to 86 (SIPHIEACINCGQCLTHCPENAIYEAQS). Positions 35, 38, 41, 45, 66, 69, 72, 76, 179, 234, 378, and 382 each coordinate [4Fe-4S] cluster. Cys382 provides a ligand contact to Fe(2+).

In terms of assembly, heterodimer of a large and a small subunit. [4Fe-4S] cluster serves as cofactor. It depends on Fe(2+) as a cofactor.

It localises to the periplasm. It carries out the reaction H2 + 2 oxidized [2Fe-2S]-[ferredoxin] = 2 reduced [2Fe-2S]-[ferredoxin] + 2 H(+). Its function is as follows. May be involved in hydrogen uptake for the reduction of sulfate to hydrogen sulfide in an electron transport chain. Cytochrome c3 is likely to be the physiological electron carrier for the enzyme. The polypeptide is Periplasmic [Fe] hydrogenase large subunit (hydA) (Nitratidesulfovibrio vulgaris (strain ATCC 29579 / DSM 644 / CCUG 34227 / NCIMB 8303 / VKM B-1760 / Hildenborough) (Desulfovibrio vulgaris)).